Here is a 293-residue protein sequence, read N- to C-terminus: Elongation factor Ts (293 aa).

The interval 80 to 83 (TDFV) is involved in Mg(2+) ion dislocation from EF-Tu.

Belongs to the EF-Ts family.

The protein localises to the cytoplasm. Associates with the EF-Tu.GDP complex and induces the exchange of GDP to GTP. It remains bound to the aminoacyl-tRNA.EF-Tu.GTP complex up to the GTP hydrolysis stage on the ribosome. This Burkholderia pseudomallei (strain 1106a) protein is Elongation factor Ts.